We begin with the raw amino-acid sequence, 234 residues long: MSRYFVAGSHTDVGKTFVSCQLIRAERAAGRSATAFKPVLSGFDPDRAEASDAGQLLEALGEPVTSTRLDRISPLRFIAPLAPPSAARLEGVVLTRDRLLTLSNAWLSRTDADLNLLEGAGGVMSPIAEDATNLDLMTGLGLPVILVGGSYLGAISHTLTALEVLRTRSLTIAAVVVSQSADPEAPDFAETVELTRQHAGGVPIFAAPRNGHAAWASALTEALAARRRLRTSAA.

12 to 17 lines the ATP pocket; it reads DVGKTF. Threonine 16 contributes to the Mg(2+) binding site. Lysine 37 is a catalytic residue. Substrate is bound at residue serine 41. Residues aspartate 52, 118–121, and 178–179 each bind ATP; these read EGAG and SQ. The Mg(2+) site is built by aspartate 52 and glutamate 118.

It belongs to the dethiobiotin synthetase family. As to quaternary structure, homodimer. It depends on Mg(2+) as a cofactor.

It is found in the cytoplasm. It catalyses the reaction (7R,8S)-7,8-diammoniononanoate + CO2 + ATP = (4R,5S)-dethiobiotin + ADP + phosphate + 3 H(+). The protein operates within cofactor biosynthesis; biotin biosynthesis; biotin from 7,8-diaminononanoate: step 1/2. Its function is as follows. Catalyzes a mechanistically unusual reaction, the ATP-dependent insertion of CO2 between the N7 and N8 nitrogen atoms of 7,8-diaminopelargonic acid (DAPA, also called 7,8-diammoniononanoate) to form a ureido ring. The chain is ATP-dependent dethiobiotin synthetase BioD from Phenylobacterium zucineum (strain HLK1).